The primary structure comprises 98 residues: Integration host factor subunit alpha (98 aa).

The tract at residues 49-70 (FGNFDLRDKNQRPGRNPKTGED) is disordered.

Belongs to the bacterial histone-like protein family. In terms of assembly, heterodimer of an alpha and a beta chain.

This protein is one of the two subunits of integration host factor, a specific DNA-binding protein that functions in genetic recombination as well as in transcriptional and translational control. In Shewanella baltica (strain OS223), this protein is Integration host factor subunit alpha.